We begin with the raw amino-acid sequence, 138 residues long: Cysteine desulfuration protein SufE (138 aa).

Residue C51 is the Cysteine persulfide intermediate of the active site.

It belongs to the SufE family. In terms of assembly, homodimer. Interacts with SufS.

Its subcellular location is the cytoplasm. Its pathway is cofactor biosynthesis; iron-sulfur cluster biosynthesis. In terms of biological role, participates in cysteine desulfuration mediated by SufS. Cysteine desulfuration mobilizes sulfur from L-cysteine to yield L-alanine and constitutes an essential step in sulfur metabolism for biosynthesis of a variety of sulfur-containing biomolecules. Functions as a sulfur acceptor for SufS, by mediating the direct transfer of the sulfur atom from the S-sulfanylcysteine of SufS, an intermediate product of cysteine desulfuration process. The polypeptide is Cysteine desulfuration protein SufE (Cronobacter sakazakii (strain ATCC BAA-894) (Enterobacter sakazakii)).